We begin with the raw amino-acid sequence, 244 residues long: Ribonuclease 3 2 (244 aa).

The RNase III domain maps to 11–136 (LKALLRRLGL…LLGALYLSVG (126 aa)). Position 50 (Glu-50) interacts with Mg(2+). The active site involves Asp-54. Mg(2+)-binding residues include Asp-122 and Glu-125. Glu-125 is an active-site residue. The DRBM domain maps to 164–234 (NYKEALQAWT…AQQAYQDFIA (71 aa)).

It belongs to the ribonuclease III family. Homodimer. It depends on Mg(2+) as a cofactor.

It localises to the cytoplasm. The catalysed reaction is Endonucleolytic cleavage to 5'-phosphomonoester.. In terms of biological role, digests double-stranded RNA. Involved in the processing of primary rRNA transcript to yield the immediate precursors to the large and small rRNAs (23S and 16S). Processes some mRNAs, and tRNAs when they are encoded in the rRNA operon. Processes pre-crRNA and tracrRNA of type II CRISPR loci if present in the organism. The polypeptide is Ribonuclease 3 2 (Synechocystis sp. (strain ATCC 27184 / PCC 6803 / Kazusa)).